Consider the following 932-residue polypeptide: Protein translocase subunit SecA, chloroplastic (932 aa).

95 to 102 (MRTGEGKT) contacts ATP. Residues 632–641 (HESRRVDNQL) are compositionally biased toward basic and acidic residues. Residues 632–653 (HESRRVDNQLRGRSGRQGDPGS) are disordered.

The protein belongs to the SecA family.

The protein resides in the plastid. The protein localises to the chloroplast stroma. It is found in the chloroplast thylakoid membrane. The enzyme catalyses ATP + H2O + chloroplast-proteinSide 1 = ADP + phosphate + chloroplast-proteinSide 2.. Functionally, has a central role in coupling the hydrolysis of ATP to the transfer of proteins across the thylakoid membrane. This chain is Protein translocase subunit SecA, chloroplastic, found in Ostreococcus lucimarinus (strain CCE9901).